The chain runs to 245 residues: Sugar fermentation stimulation protein homolog (245 aa).

It belongs to the SfsA family.

This is Sugar fermentation stimulation protein homolog from Yersinia pestis bv. Antiqua (strain Nepal516).